Reading from the N-terminus, the 617-residue chain is Pentatricopeptide repeat-containing protein At4g18520, chloroplastic (617 aa).

The N-terminal 19 residues, 1–19, are a transit peptide targeting the chloroplast; the sequence is MFSLSLIQPRLRISEIPVT. 14 PPR repeats span residues 116–146, 147–181, 183–217, 222–247, 248–282, 283–317, 318–348, 349–383, 384–418, 419–449, 450–484, 485–519, 520–550, and 551–585; these read VIYF…MPEK, NTVT…GIRF, NERM…GVGN, SSLV…MEEK, DVIS…WFLP, NEFT…MIKT, DVFV…MSNR, NTVT…HLIA, NNLT…SIEK, NVYI…LPSR, DVVS…GVEP, NPFT…HALS, NVFV…MPEK, and NLVS…GFEV.

The protein belongs to the PPR family. PCMP-A subfamily. In terms of assembly, interacts with MORF8/RIP1, MORF2/RIP2 and MORF9/RIP9. In terms of tissue distribution, expressed specifically in aerial greening tissues, such as cotyledons, rosette leaves, cauline leaves, stems, sepals, stamens, carpels and siliques.

It localises to the plastid. The protein localises to the chloroplast. Functionally, required for proper chloroplast development. Involved in the regulation of plastid gene expression probably through regulation of plastid-encoded polymerase (PEP) dependent chloroplast transcription. Required for RNA editing of several chloroplastic transcripts, especially accD transcripts. Required for processing of the chloroplastic rpoA pre-mRNA. Required for the monocistronic rpoA transcript processing from the rpl23-rpl2-rps19-rpl22-rps3-rpl16-rpl14-rps8-rpl36-rps11-rpoA polycistron. Binds the intergenic sequence of rps11-rpoA for rpoA monocistronic RNA cleavage. This Arabidopsis thaliana (Mouse-ear cress) protein is Pentatricopeptide repeat-containing protein At4g18520, chloroplastic (PCMP-A2).